The chain runs to 417 residues: 4-hydroxy-3-methylbut-2-en-1-yl diphosphate synthase (flavodoxin) (417 aa).

[4Fe-4S] cluster contacts are provided by Cys-304, Cys-307, Cys-350, and Glu-357.

Belongs to the IspG family. [4Fe-4S] cluster is required as a cofactor.

The catalysed reaction is (2E)-4-hydroxy-3-methylbut-2-enyl diphosphate + oxidized [flavodoxin] + H2O + 2 H(+) = 2-C-methyl-D-erythritol 2,4-cyclic diphosphate + reduced [flavodoxin]. It participates in isoprenoid biosynthesis; isopentenyl diphosphate biosynthesis via DXP pathway; isopentenyl diphosphate from 1-deoxy-D-xylulose 5-phosphate: step 5/6. Functionally, converts 2C-methyl-D-erythritol 2,4-cyclodiphosphate (ME-2,4cPP) into 1-hydroxy-2-methyl-2-(E)-butenyl 4-diphosphate. This is 4-hydroxy-3-methylbut-2-en-1-yl diphosphate synthase (flavodoxin) from Rhizobium rhizogenes (strain K84 / ATCC BAA-868) (Agrobacterium radiobacter).